Reading from the N-terminus, the 657-residue chain is Hemocyanin A chain (657 aa).

A disulfide bridge connects residues C93 and C98. Residue N167 is glycosylated (N-linked (GlcNAc...) asparagine). 6 residues coordinate Cu cation: H194, H198, H224, H344, H348, and H384. 2 disulfides stabilise this stretch: C483-C502 and C562-C609. Positions 594 to 616 are disordered; sequence EGHNGGHDYGGTHAQCGVHGEAY.

This sequence belongs to the tyrosinase family. Hemocyanin subfamily. In terms of assembly, hexamer of a number of different chains, of which A, B, and C have been identified. In terms of tissue distribution, hemolymph.

The protein resides in the secreted. Its subcellular location is the extracellular space. Its function is as follows. Hemocyanins are copper-containing oxygen carriers occurring freely dissolved in the hemolymph of many mollusks and arthropods. This Panulirus interruptus (California spiny lobster) protein is Hemocyanin A chain.